A 367-amino-acid chain; its full sequence is Uptake hydrogenase small subunit (367 aa).

A signal peptide (tat-type signal) is located at residues 1–45 (MTPTETFYEVMRRQGVTRRSFLKFCSLTATALGLGPAYTSEIAHA). [4Fe-4S] cluster is bound by residues C62, C65, C160, C194, H232, C235, C260, and C266. 3 residues coordinate [3Fe-4S] cluster: C275, C294, and C297.

The protein belongs to the [NiFe]/[NiFeSe] hydrogenase small subunit family. As to quaternary structure, heterodimer of a large and a small subunit. [4Fe-4S] cluster is required as a cofactor. [3Fe-4S] cluster serves as cofactor. In terms of processing, predicted to be exported by the Tat system. The position of the signal peptide cleavage has been experimentally proven.

It localises to the cell membrane. It catalyses the reaction H2 + A = AH2. This enzyme recycles the H(2) produced by nitrogenase to increase the production of ATP and to protect nitrogenase against inhibition or damage by O(2) under carbon- or phosphate-limited conditions. The protein is Uptake hydrogenase small subunit (hoxS) of Afipia carboxidovorans (strain ATCC 49405 / DSM 1227 / KCTC 32145 / OM5) (Oligotropha carboxidovorans).